The primary structure comprises 235 residues: Motile sperm domain-containing protein 3 (235 aa).

Disordered regions lie at residues 1–30 and 143–170; these read MRRGAPQDQELVGPGAPGRGSRGAPPPSGP and ELQGQSDPTPHPEPHSWTASSTAQPFPE. An MSP domain is found at 33-145; sequence PVLVFPPDLV…RAPAYPLELQ (113 aa). A run of 2 helical transmembrane segments spans residues 180–200 and 213–233; these read SFLLFLLMGTVSVAFLLLPLQ and VSLGQKLVAAYVLGLLTMVFL.

It localises to the membrane. The chain is Motile sperm domain-containing protein 3 (MOSPD3) from Bos taurus (Bovine).